Reading from the N-terminus, the 210-residue chain is Fibroblast growth factor 8 (210 aa).

Positions 1 to 27 are cleaved as a signal peptide; sequence MRLIPSRLSYLFLHLFAFCYYAQVTIQ.

It belongs to the heparin-binding growth factors family. Monomer. Homodimer.

The protein resides in the secreted. In terms of biological role, plays an important role in the regulation of embryonic development, cell proliferation, cell differentiation and cell migration. Required for Kupffer's vesicle ciliogenesis. This chain is Fibroblast growth factor 8, found in Danio rerio (Zebrafish).